Consider the following 292-residue polypeptide: 11-beta-hydroxysteroid dehydrogenase 1 (292 aa).

Residues 7–24 (YLLPILGIFLAYYYYSAN) traverse the membrane as a helical segment.

This sequence belongs to the short-chain dehydrogenases/reductases (SDR) family. Homodimer. In terms of tissue distribution, expressed highest in liver and ovaries (corpora lutea, granulosa cells, thecal, uterine caruncle and intercarunculer tissues), lower expression in kidney and spleen, and lowest in the adrenal.

Its subcellular location is the endoplasmic reticulum membrane. It catalyses the reaction an 11beta-hydroxysteroid + NADP(+) = an 11-oxosteroid + NADPH + H(+). It carries out the reaction corticosterone + NADP(+) = 11-dehydrocorticosterone + NADPH + H(+). The catalysed reaction is cortisone + NADPH + H(+) = cortisol + NADP(+). The enzyme catalyses a 7beta-hydroxysteroid + NADP(+) = a 7-oxosteroid + NADPH + H(+). It catalyses the reaction 7-oxocholesterol + NADPH + H(+) = 7beta-hydroxycholesterol + NADP(+). It carries out the reaction chenodeoxycholate + NADP(+) = 7-oxolithocholate + NADPH + H(+). The catalysed reaction is 7-oxolithocholate + NADPH + H(+) = ursodeoxycholate + NADP(+). The enzyme catalyses glycochenodeoxycholate + NADP(+) = 7-oxoglycolithocholate + NADPH + H(+). It catalyses the reaction taurochenodeoxycholate + NADP(+) = 7-oxotaurolithocholate + NADPH + H(+). It carries out the reaction tauroursodeoxycholate + NADP(+) = 7-oxotaurolithocholate + NADPH + H(+). The catalysed reaction is glycoursodeoxycholate + NADP(+) = 7-oxoglycolithocholate + NADPH + H(+). The enzyme catalyses 7-oxopregnenolone + NADPH + H(+) = 7beta-hydroxypregnenolone + NADP(+). It catalyses the reaction 3beta,7alpha-dihydroxyandrost-5-en-17-one + NADP(+) = 3beta-hydroxy-5-androstene-7,17-dione + NADPH + H(+). It carries out the reaction 3beta-hydroxy-5-androstene-7,17-dione + NADPH + H(+) = 3beta,7beta-dihydroxyandrost-5-en-17-one + NADP(+). The catalysed reaction is 3beta-hydroxy-5alpha-androstane-7,17-dione + NADPH + H(+) = 3beta,7beta-dihydroxy-5alpha-androstan-17-one + NADP(+). In terms of biological role, controls the reversible conversion of biologically active glucocorticoids such as cortisone to cortisol, and 11-dehydrocorticosterone to corticosterone in the presence of NADP(H). Participates in the corticosteroid receptor-mediated anti-inflammatory response, as well as metabolic and homeostatic processes. Plays a role in the secretion of aqueous humor in the eye, maintaining a normotensive, intraocular environment. Bidirectional in vitro, predominantly functions as a reductase in vivo, thereby increasing the concentration of active glucocorticoids. It has broad substrate specificity, besides glucocorticoids, it accepts other steroid and sterol substrates. Interconverts 7-oxo- and 7-hydroxy-neurosteroids such as 7-oxopregnenolone and 7beta-hydroxypregnenolone, 7-oxodehydroepiandrosterone (3beta-hydroxy-5-androstene-7,17-dione) and 7beta-hydroxydehydroepiandrosterone (3beta,7beta-dihydroxyandrost-5-en-17-one), among others. Catalyzes the stereo-specific conversion of the major dietary oxysterol, 7-ketocholesterol (7-oxocholesterol), into the more polar 7-beta-hydroxycholesterol metabolite. 7-oxocholesterol is one of the most important oxysterols, it participates in several events such as induction of apoptosis, accumulation in atherosclerotic lesions, lipid peroxidation, and induction of foam cell formation. Mediates the 7-oxo reduction of 7-oxolithocholate mainly to chenodeoxycholate, and to a lesser extent to ursodeoxycholate, both in its free form and when conjugated to glycine or taurine, providing a link between glucocorticoid activation and bile acid metabolism. Catalyzes the synthesis of 7-beta-25-dihydroxycholesterol from 7-oxo-25-hydroxycholesterol in vitro, which acts as a ligand for the G-protein-coupled receptor (GPCR) Epstein-Barr virus-induced gene 2 (EBI2) and may thereby regulate immune cell migration. The chain is 11-beta-hydroxysteroid dehydrogenase 1 from Bos taurus (Bovine).